Reading from the N-terminus, the 251-residue chain is Large ribosomal subunit protein uL16m (251 aa).

Residues 1–29 (MWRLLSGARAPVLRATLSDSWAAPPARAG) constitute a mitochondrion transit peptide.

The protein belongs to the universal ribosomal protein uL16 family. Component of the mitochondrial ribosome large subunit (39S) which comprises a 16S rRNA and about 50 distinct proteins.

The protein resides in the mitochondrion. This Bos taurus (Bovine) protein is Large ribosomal subunit protein uL16m (MRPL16).